A 111-amino-acid polypeptide reads, in one-letter code: Large ribosomal subunit protein P2w (111 aa).

The interval 63–111 (ASVPSGGGVAVSAAPSSGGGGAAAPAEKKEAKKEEKEESDDDMGFSLFE) is disordered. A compositionally biased stretch (basic and acidic residues) spans 88–98 (AEKKEAKKEEK). S101 is modified (phosphoserine).

It belongs to the eukaryotic ribosomal protein P1/P2 family. As to quaternary structure, P1 and P2 exist as dimers at the large ribosomal subunit.

Plays an important role in the elongation step of protein synthesis. The sequence is that of Large ribosomal subunit protein P2w (RPP2D) from Arabidopsis thaliana (Mouse-ear cress).